A 220-amino-acid polypeptide reads, in one-letter code: Competence protein ComFC (220 aa).

Belongs to the ComF/GntX family. Monomer and dimer in solution. Interacts with ComFA and DprA; ComFA-ComFC form rings about 150 Angstroms in diameter with apparent 6-fold symmetry.

Functionally, involved in transformation (genetic competence for DNA uptake). This chain is Competence protein ComFC, found in Streptococcus pneumoniae (strain ATCC BAA-255 / R6).